The following is a 240-amino-acid chain: Orotidine 5'-phosphate decarboxylase (240 aa).

Substrate contacts are provided by residues aspartate 15, lysine 37, aspartate 64 to threonine 73, threonine 125, arginine 186, glutamine 195, glycine 215, and arginine 216. Lysine 66 serves as the catalytic Proton donor.

This sequence belongs to the OMP decarboxylase family. Type 1 subfamily. As to quaternary structure, homodimer.

It carries out the reaction orotidine 5'-phosphate + H(+) = UMP + CO2. Its pathway is pyrimidine metabolism; UMP biosynthesis via de novo pathway; UMP from orotate: step 2/2. Functionally, catalyzes the decarboxylation of orotidine 5'-monophosphate (OMP) to uridine 5'-monophosphate (UMP). This chain is Orotidine 5'-phosphate decarboxylase, found in Pelobacter propionicus (strain DSM 2379 / NBRC 103807 / OttBd1).